Reading from the N-terminus, the 264-residue chain is Hemin import ATP-binding protein HmuV (264 aa).

Residues 10–246 (LQAQNLSYSI…HTLRKWYQAD (237 aa)) enclose the ABC transporter domain. 42–49 (GPNGAGKS) is an ATP binding site.

The protein belongs to the ABC transporter superfamily. Heme (hemin) importer (TC 3.A.1.14.5) family. The complex is composed of two ATP-binding proteins (HmuV), two transmembrane proteins (HmuU) and a solute-binding protein (HmuT).

It localises to the cell inner membrane. Part of the ABC transporter complex HmuTUV involved in hemin import. Responsible for energy coupling to the transport system. The polypeptide is Hemin import ATP-binding protein HmuV (Photorhabdus laumondii subsp. laumondii (strain DSM 15139 / CIP 105565 / TT01) (Photorhabdus luminescens subsp. laumondii)).